The primary structure comprises 340 residues: Glutaminase 2 (340 aa).

Substrate contacts are provided by Ser89, Asn140, Asn191, Tyr215, and Tyr267.

The protein belongs to the glutaminase family. As to quaternary structure, homotetramer.

It catalyses the reaction L-glutamine + H2O = L-glutamate + NH4(+). The chain is Glutaminase 2 from Yersinia pestis.